A 270-amino-acid chain; its full sequence is Replication protein A 32 kDa subunit (270 aa).

The residue at position 1 (methionine 1) is an N-acetylmethionine. Phosphoserine; by PRKDC is present on residues serine 4 and serine 8. The residue at position 21 (threonine 21) is a Phosphothreonine; by PRKDC. Residues 21-41 form a disordered region; it reads TQSPGGFGSPAPSQAEKKSRA. Serine 23 is subject to Phosphoserine; by CDK2. Position 29 is a phosphoserine; by CDK1 (serine 29). Position 33 is a phosphoserine; by PRKDC (serine 33). Residues lysine 37 and lysine 38 each participate in a glycyl lysine isopeptide (Lys-Gly) (interchain with G-Cter in ubiquitin) cross-link. The OB DNA-binding region spans 74 to 148; sequence VTIVGIIRHA…KSLVAFKIMP (75 aa). Residues 187–270 are interaction with RAD52, TIPIN, UNG and XPA; sequence GMSEAGNFGG…DDHFKSTDAE (84 aa).

This sequence belongs to the replication factor A protein 2 family. As to quaternary structure, component of the replication protein A complex (RPA/RP-A), a heterotrimeric complex composed of RPA1, RPA2 and RPA3. Interacts with PRPF19; the PRP19-CDC5L complex is recruited to the sites of DNA repair where it ubiquitinates the replication protein A complex (RPA). Interacts with SERTAD3. Interacts with TIPIN. Interacts with TIMELESS. Interacts with PPP4R2; the interaction is direct, DNA damage-dependent and mediates the recruitment of the PP4 catalytic subunit PPP4C. Interacts (hyperphosphorylated) with RAD51. Interacts with SMARCAL1; the interaction is direct and mediates the recruitment to the RPA complex of SMARCAL1. Interacts with RAD52 and XPA; those interactions are direct and associate RAD52 and XPA to the RPA complex. Interacts with FBH1. Interacts with ETAA1; the interaction is direct and promotes ETAA1 recruitment at stalled replication forks. Interacts with RFWD3. Interacts with DDI2. Interacts (in unphosphorylated form via N-terminus) with EIF4EBP3; the interaction enhances EIF4EBP3-mediated inhibition of EIF4E-mediated mRNA nuclear export. Interacts with BRIP1/FANCJ via the RPA1 subunit; following DNA damage they colocalize in foci in the nucleus. Interacts with nuclear UNG (isoform 2); this interaction mediates UNG recruitment to RPA-coated single-stranded DNA at stalled replication forks. Differentially phosphorylated throughout the cell cycle, becoming phosphorylated at the G1-S transition and dephosphorylated in late mitosis. Mainly phosphorylated at Ser-23 and Ser-29, by cyclin A-CDK2 and cyclin B-CDK1, respectively during DNA replication and mitosis. Dephosphorylation may require the serine/threonine-protein phosphatase 4. Phosphorylation at Ser-23 and Ser-29 is a prerequisite for further phosphorylation. Becomes hyperphosphorylated on additional residues including Ser-4, Ser-8, Thr-21 and Ser-33 in response to DNA damage. Hyperphosphorylation is mediated by ATM, ATR and PRKDC. Primarily recruited to DNA repair nuclear foci as a hypophosphorylated form it undergoes subsequent hyperphosphorylation, catalyzed by ATR. Hyperphosphorylation is required for RAD51 recruitment to chromatin and efficient DNA repair. Phosphorylation at Thr-21 depends upon RFWD3 presence. In terms of processing, DNA damage-induced 'Lys-63'-linked polyubiquitination by PRPF19 mediates ATRIP recruitment to the RPA complex at sites of DNA damage and activation of ATR. Ubiquitinated by RFWD3 at stalled replication forks in response to DNA damage: ubiquitination by RFWD3 does not lead to degradation by the proteasome and promotes removal of the RPA complex from stalled replication forks, promoting homologous recombination.

It localises to the nucleus. The protein localises to the PML body. Its function is as follows. As part of the heterotrimeric replication protein A complex (RPA/RP-A), binds and stabilizes single-stranded DNA intermediates that form during DNA replication or upon DNA stress. It prevents their reannealing and in parallel, recruits and activates different proteins and complexes involved in DNA metabolism. Thereby, it plays an essential role both in DNA replication and the cellular response to DNA damage. In the cellular response to DNA damage, the RPA complex controls DNA repair and DNA damage checkpoint activation. Through recruitment of ATRIP activates the ATR kinase a master regulator of the DNA damage response. It is required for the recruitment of the DNA double-strand break repair factors RAD51 and RAD52 to chromatin in response to DNA damage. Also recruits to sites of DNA damage proteins like XPA and XPG that are involved in nucleotide excision repair and is required for this mechanism of DNA repair. Also plays a role in base excision repair (BER) probably through interaction with UNG. Also recruits SMARCAL1/HARP, which is involved in replication fork restart, to sites of DNA damage. May also play a role in telomere maintenance. RPA stimulates 5'-3' helicase activity of BRIP1/FANCJ. The chain is Replication protein A 32 kDa subunit (RPA2) from Homo sapiens (Human).